A 191-amino-acid polypeptide reads, in one-letter code: Polysulfide reductase chain B (191 aa).

3 consecutive 4Fe-4S ferredoxin-type domains span residues Y5 to V34, G50 to D83, and G84 to V113. The [4Fe-4S] cluster site is built by C14, C17, C20, C24, C61, C64, C69, C73, C93, C96, C99, C103, C120, C123, C136, and C140.

Functional polysulfide reductase is made up of three different (A, B, and C) subunits.

Component of the phosphorylative electron transport system with polysulfide as the terminal acceptor. This Wolinella succinogenes (strain ATCC 29543 / DSM 1740 / CCUG 13145 / JCM 31913 / LMG 7466 / NCTC 11488 / FDC 602W) (Vibrio succinogenes) protein is Polysulfide reductase chain B (psrB).